The following is a 739-amino-acid chain: Copalyl diphosphate synthase 1 (739 aa).

Position 154 (K154) interacts with substrate. Residues D287 and D289 each coordinate Mg(2+). The short motif at 287–290 (DADD) is the DXDD motif element. Substrate is bound at residue K373.

Belongs to the terpene synthase family. It depends on Mg(2+) as a cofactor.

The enzyme catalyses (2E,6E,10E)-geranylgeranyl diphosphate = (+)-copalyl diphosphate. It functions in the pathway secondary metabolite biosynthesis; terpenoid biosynthesis. Its function is as follows. Monofunctional diterpene synthase converting geranylgeranyl diphosphate to copalyl diphosphate. The polypeptide is Copalyl diphosphate synthase 1 (CPS1) (Selaginella moellendorffii (Spikemoss)).